We begin with the raw amino-acid sequence, 377 residues long: uncharacterized protein (377 aa).

Disordered stretches follow at residues Y10–N79, K91–E141, E182–T257, E265–E284, and L289–P326. Composition is skewed to low complexity over residues I14 to Q24, N46 to N79, and N93 to N124. 2 stretches are compositionally biased toward basic and acidic residues: residues E182 to E196 and Q209 to E218. The span at T221 to T257 shows a compositional bias: low complexity. 2 stretches are compositionally biased toward basic and acidic residues: residues E265–N274 and N292–K303. Positions K311–K320 are enriched in basic residues.

This is an uncharacterized protein from Dictyostelium discoideum (Social amoeba).